A 508-amino-acid chain; its full sequence is Maturase K (508 aa).

This sequence belongs to the intron maturase 2 family. MatK subfamily.

The protein localises to the plastid. It is found in the chloroplast. Functionally, usually encoded in the trnK tRNA gene intron. Probably assists in splicing its own and other chloroplast group II introns. This is Maturase K from Cunninghamia lanceolata (China fir).